The chain runs to 66 residues: Cold shock-like protein CspLA (66 aa).

One can recognise a CSD domain in the interval 4 to 63 (GTVKWFNAEKGFGFIERENGDDVFVHFSAIQGDGFKSLDEGQAVTFDVEEGQRGPQAANV).

In terms of assembly, homodimer.

It localises to the cytoplasm. In Listeria innocua serovar 6a (strain ATCC BAA-680 / CLIP 11262), this protein is Cold shock-like protein CspLA (cspLA).